The chain runs to 262 residues: 3-deoxy-manno-octulosonate cytidylyltransferase (262 aa).

The protein belongs to the KdsB family.

The protein localises to the cytoplasm. It catalyses the reaction 3-deoxy-alpha-D-manno-oct-2-ulosonate + CTP = CMP-3-deoxy-beta-D-manno-octulosonate + diphosphate. The protein operates within nucleotide-sugar biosynthesis; CMP-3-deoxy-D-manno-octulosonate biosynthesis; CMP-3-deoxy-D-manno-octulosonate from 3-deoxy-D-manno-octulosonate and CTP: step 1/1. Its pathway is bacterial outer membrane biogenesis; lipopolysaccharide biosynthesis. In terms of biological role, activates KDO (a required 8-carbon sugar) for incorporation into bacterial lipopolysaccharide in Gram-negative bacteria. The chain is 3-deoxy-manno-octulosonate cytidylyltransferase from Acidovorax sp. (strain JS42).